We begin with the raw amino-acid sequence, 263 residues long: HTH-type transcriptional repressor NanR (263 aa).

The segment at 1–25 (MDVMNAFDSQAEDSPTSLGRSLRRR) is disordered. The HTH gntR-type domain occupies 30–98 (KKLSEMVEEE…NGERARVSRP (69 aa)). A DNA-binding region (H-T-H motif) is located at residues 58–77 (ERELMAFFNVGRPSVREALA).

This sequence belongs to the NanR family.

Functionally, transcriptional repressor that controls expression of the genes required for the catabolism of sialic acids. The chain is HTH-type transcriptional repressor NanR from Salmonella schwarzengrund (strain CVM19633).